A 196-amino-acid polypeptide reads, in one-letter code: MQLKRVAEAKLPTPWGDFLMVGFEELATGHDHVALVYGDISGQTPVLARVHSECLTGDALFSLRCDCGFQLEAALTHIAEEGRGILLYHRQEGRNIGLLNKIRAYALQDQGYDTVEANHQLGFAADERDFTLCADMFKLLGVDEVRLLTNNPKKVEILTEAGINIVERVPLIVGRNPNNEHYLDTKAAKMGHLLGK.

49–53 (RVHSE) provides a ligand contact to GTP. Zn(2+) contacts are provided by C54, C65, and C67. GTP-binding positions include Q70, 92–94 (EGR), and T114. D126 serves as the catalytic Proton acceptor. R128 functions as the Nucleophile in the catalytic mechanism. Residues T149 and K154 each coordinate GTP.

The protein belongs to the GTP cyclohydrolase II family. As to quaternary structure, homodimer. Requires Zn(2+) as cofactor.

The catalysed reaction is GTP + 4 H2O = 2,5-diamino-6-hydroxy-4-(5-phosphoribosylamino)-pyrimidine + formate + 2 phosphate + 3 H(+). It participates in cofactor biosynthesis; riboflavin biosynthesis; 5-amino-6-(D-ribitylamino)uracil from GTP: step 1/4. Functionally, catalyzes the conversion of GTP to 2,5-diamino-6-ribosylamino-4(3H)-pyrimidinone 5'-phosphate (DARP), formate and pyrophosphate. This is GTP cyclohydrolase-2 from Citrobacter koseri (strain ATCC BAA-895 / CDC 4225-83 / SGSC4696).